The sequence spans 426 residues: Adenylosuccinate synthetase (426 aa).

Residues 12-18 and 40-42 contribute to the GTP site; these read GDEGKGK and GHT. Catalysis depends on Asp-13, which acts as the Proton acceptor. Residues Asp-13 and Gly-40 each contribute to the Mg(2+) site. Residues 13-16, 38-41, Thr-128, Arg-142, Gln-223, Thr-238, and Arg-302 contribute to the IMP site; these read DEGK and NAGH. His-41 functions as the Proton donor in the catalytic mechanism. 298–304 serves as a coordination point for substrate; that stretch reads TTTGRAR. Residues Arg-304, 330 to 332, and 412 to 414 contribute to the GTP site; these read KLD and SVG.

It belongs to the adenylosuccinate synthetase family. Homodimer. The cofactor is Mg(2+).

It localises to the cytoplasm. It carries out the reaction IMP + L-aspartate + GTP = N(6)-(1,2-dicarboxyethyl)-AMP + GDP + phosphate + 2 H(+). Its pathway is purine metabolism; AMP biosynthesis via de novo pathway; AMP from IMP: step 1/2. Its function is as follows. Plays an important role in the de novo pathway of purine nucleotide biosynthesis. Catalyzes the first committed step in the biosynthesis of AMP from IMP. The sequence is that of Adenylosuccinate synthetase from Thermoanaerobacter pseudethanolicus (strain ATCC 33223 / 39E) (Clostridium thermohydrosulfuricum).